Reading from the N-terminus, the 462-residue chain is Probable peptidoglycan glycosyltransferase FtsW (462 aa).

A disordered region spans residues 1–28 (MREPRHVPQLRASGRRFPQRGRRHRFGK). Residues 1-92 (MREPRHVPQL…RSRMLDFDYS (92 aa)) are Cytoplasmic-facing. The span at 13–27 (SGRRFPQRGRRHRFG) shows a compositional bias: basic residues. The helical transmembrane segment at 93–113 (LLWVSIALLGLGVVMVYSASI) threads the bilayer. The Periplasmic segment spans residues 114–127 (AMPDSPKYASYHDY). The helical transmembrane segment at 128–148 (AFLLRHCVSLVVAFVAAVIAF) threads the bilayer. Topologically, residues 149–158 (RVPVSTWDKY) are cytoplasmic. The chain crosses the membrane as a helical span at residues 159–179 (APHLFLIALVGLVIVLIPHIG). At 180-192 (KGVNGARRWIPLG) the chain is on the periplasmic side. The helical transmembrane segment at 193 to 215 (ITNMQPSEIMKLAVTIYAANYTV) threads the bilayer. Residues 216–223 (RKQEYMQS) lie on the Cytoplasmic side of the membrane. Residues 224–244 (FAKGFLPMAFAVGLVGALLLL) form a helical membrane-spanning segment. Residues 245-247 (EPD) are Periplasmic-facing. A helical membrane pass occupies residues 248–268 (MGAFMVVAAIAMGVLFLGGVN). At 269–270 (GK) the chain is on the cytoplasmic side. A helical transmembrane segment spans residues 271-291 (LFGGLVATAVGTFTMLVWLSP). Topologically, residues 292–349 (WRRERIFAYLDPWDERYAQGKAYQLTHSLIAFGRGEWFGVGLGGSVEKLNYLPEAHTD) are periplasmic. Residues 350–370 (FILAVIGEELGFVGVLVVILL) traverse the membrane as a helical segment. Residues 371 to 398 (FYWIVRRSFEIGRQALALDRTFAGLMAK) are Cytoplasmic-facing. The chain crosses the membrane as a helical span at residues 399 to 419 (GVGIWFGAQAFINMGVNLGLL). Over 420 to 425 (PTKGLT) the chain is Periplasmic. The helical transmembrane segment at 426 to 446 (LPLVSYGGSGILLNCISLAVL) threads the bilayer. The Cytoplasmic segment spans residues 447 to 462 (LRVDYENRVLMRGGKV).

Belongs to the SEDS family. FtsW subfamily.

The protein resides in the cell inner membrane. The enzyme catalyses [GlcNAc-(1-&gt;4)-Mur2Ac(oyl-L-Ala-gamma-D-Glu-L-Lys-D-Ala-D-Ala)](n)-di-trans,octa-cis-undecaprenyl diphosphate + beta-D-GlcNAc-(1-&gt;4)-Mur2Ac(oyl-L-Ala-gamma-D-Glu-L-Lys-D-Ala-D-Ala)-di-trans,octa-cis-undecaprenyl diphosphate = [GlcNAc-(1-&gt;4)-Mur2Ac(oyl-L-Ala-gamma-D-Glu-L-Lys-D-Ala-D-Ala)](n+1)-di-trans,octa-cis-undecaprenyl diphosphate + di-trans,octa-cis-undecaprenyl diphosphate + H(+). The protein operates within cell wall biogenesis; peptidoglycan biosynthesis. In terms of biological role, peptidoglycan polymerase that is essential for cell division. This Burkholderia thailandensis (strain ATCC 700388 / DSM 13276 / CCUG 48851 / CIP 106301 / E264) protein is Probable peptidoglycan glycosyltransferase FtsW.